We begin with the raw amino-acid sequence, 1881 residues long: Genome polyprotein (1881 aa).

Polar residues predominate over residues methionine 1–serine 16. Residues methionine 1 to valine 93 form a disordered region. A compositionally biased stretch (basic and acidic residues) spans glutamate 37–valine 50. Residues aspartate 564–lysine 720 enclose the SF3 helicase domain. Glycine 590–threonine 597 contacts ATP. Tyrosine 1093 is modified (O-(5'-phospho-RNA)-tyrosine). In terms of domain architecture, Peptidase C24 spans glycine 1188–aspartate 1341. Active-site for 3CLpro activity residues include histidine 1222, glutamate 1243, and cysteine 1305. The RdRp catalytic domain occupies histidine 1593–methionine 1718.

As to quaternary structure, homodimer. Interacts with NTPase, protein p30 and protease-polymerase p76. In terms of assembly, interacts with capsid protein VP1 and protease-polymerase p76. Interacts with host IEF4e; this interaction plays a role in translation of viral proteins. Homooligomer. Interacts with Vpg, protein p32 and may interact with capsid protein VP1. Post-translationally, specific enzymatic cleavages in vivo yield mature proteins. Pro-Pol is first autocatalytically cleaved, then processes the whole polyprotein. In terms of processing, VPg is uridylylated by the polymerase and is covalently attached to the 5'-end of the polyadenylated genomic and subgenomic RNAs. This uridylylated form acts as a nucleotide-peptide primer for the polymerase.

It is found in the host endoplasmic reticulum membrane. The enzyme catalyses a ribonucleoside 5'-triphosphate + H2O = a ribonucleoside 5'-diphosphate + phosphate + H(+). The catalysed reaction is RNA(n) + a ribonucleoside 5'-triphosphate = RNA(n+1) + diphosphate. It catalyses the reaction Endopeptidase with a preference for cleavage when the P1 position is occupied by Glu-|-Xaa and the P1' position is occupied by Gly-|-Yaa.. Functionally, together with NTPase and NS4, initiates the formation of the replication complex. Induces the proliferation of the host smooth ER membranes forming long tubular structures. These remodeled membranes probably form the viral factories that contain the replication complex. Displays NTPase activity, but no helicase activity. Induces the formation of convoluted membranes derived from the host ER. These remodeled membranes probably form the viral factories that contain the replication complex. Together with NS2 and NS4, initiates the formation of the replication complex. In terms of biological role, probable key protein responsible for the formation of membrane alterations by the virus. Induces the formation of convoluted membranes derived from the host ER. These remodeled membranes probably form the viral factories that contain the replication complex. Together with NS2 and NTPase, initiates the formation of the replication complex. Its function is as follows. Viral genome-linked protein is covalently linked to the 5'-end of the positive-strand, negative-strand genomic RNAs and subgenomic RNA. Acts as a genome-linked replication primer. May recruit ribosome to viral RNA thereby promoting viral proteins translation. Interacts with host translation initiation complex to allow the translation of viral proteins. Functionally, protease-polymerase p76 processes the polyprotein: Pro-Pol is first released by autocleavage, then all other proteins are cleaved. Cleaves host translation initiation factor eIF4G1, eIF4G2 and PABP1 thereby inducing a shutdown of host protein synthesis. This shutdown may not prevent viral mRNA from being translated since viral Vpg replaces the cap. Also functions as an RNA-directed RNA polymerase, which replicates genomic and antigenomic viral RNA by recognizing specific signals. Also transcribes a subgenomic mRNA by initiating RNA synthesis internally on antigenomic RNA. This sgRNA codes for structural proteins. Catalyzes the covalent attachment VPg with viral RNAs. In Vesicular exanthema of swine virus serotype A48 (isolate Swine/United States/A48/1948) (VESV), this protein is Genome polyprotein.